A 554-amino-acid polypeptide reads, in one-letter code: Valerianol synthase TPS1F (554 aa).

2 residues coordinate Mg(2+): aspartate 307 and aspartate 311. Positions 326–330 match the DDXXD motif motif; the sequence is VQRWD. Aspartate 452, serine 456, and glutamate 460 together coordinate Mg(2+).

It belongs to the terpene synthase family. Mg(2+) serves as cofactor.

It catalyses the reaction (2E,6E)-farnesyl diphosphate + H2O = valerianol + diphosphate. It functions in the pathway secondary metabolite biosynthesis; terpenoid biosynthesis. Functionally, terpene synthase that catalyzes the biosynthesis of the terpene valerianol, which is a volatile compound of floral scent. This Camellia hiemalis (Camellia) protein is Valerianol synthase TPS1F.